The following is a 293-amino-acid chain: Pyridoxal 5'-phosphate synthase subunit PdxS (293 aa).

D-ribose 5-phosphate is bound at residue Asp-23. Lys-80 functions as the Schiff-base intermediate with D-ribose 5-phosphate in the catalytic mechanism. D-ribose 5-phosphate is bound at residue Gly-152. Residue Arg-164 participates in D-glyceraldehyde 3-phosphate binding. Residues Gly-213 and Gly-234–Ser-235 each bind D-ribose 5-phosphate.

This sequence belongs to the PdxS/SNZ family. In the presence of PdxT, forms a dodecamer of heterodimers.

The enzyme catalyses aldehydo-D-ribose 5-phosphate + D-glyceraldehyde 3-phosphate + L-glutamine = pyridoxal 5'-phosphate + L-glutamate + phosphate + 3 H2O + H(+). It participates in cofactor biosynthesis; pyridoxal 5'-phosphate biosynthesis. Functionally, catalyzes the formation of pyridoxal 5'-phosphate from ribose 5-phosphate (RBP), glyceraldehyde 3-phosphate (G3P) and ammonia. The ammonia is provided by the PdxT subunit. Can also use ribulose 5-phosphate and dihydroxyacetone phosphate as substrates, resulting from enzyme-catalyzed isomerization of RBP and G3P, respectively. This is Pyridoxal 5'-phosphate synthase subunit PdxS from Chloroflexus aggregans (strain MD-66 / DSM 9485).